Reading from the N-terminus, the 206-residue chain is 3-isopropylmalate dehydratase small subunit (206 aa).

This sequence belongs to the LeuD family. LeuD type 1 subfamily. As to quaternary structure, heterodimer of LeuC and LeuD.

It carries out the reaction (2R,3S)-3-isopropylmalate = (2S)-2-isopropylmalate. It functions in the pathway amino-acid biosynthesis; L-leucine biosynthesis; L-leucine from 3-methyl-2-oxobutanoate: step 2/4. In terms of biological role, catalyzes the isomerization between 2-isopropylmalate and 3-isopropylmalate, via the formation of 2-isopropylmaleate. In Leptospira borgpetersenii serovar Hardjo-bovis (strain JB197), this protein is 3-isopropylmalate dehydratase small subunit.